The chain runs to 942 residues: UvrABC system protein A (942 aa).

ATP is bound at residue 32–39 (GLSGSGKS). The segment at 251 to 278 (CPVCGFTVPELEPRLFSFNAPFGSCPTC) adopts a C4-type zinc-finger fold. 2 ABC transporter domains span residues 308–589 (WNPI…KKSI) and 609–937 (GNGR…HYLK). An ATP-binding site is contributed by 641–648 (GVSGSGKS). The C4-type zinc-finger motif lies at 740 to 766 (CEACSGDGIIKIEMHFLPDVYVPCEVC).

It belongs to the ABC transporter superfamily. UvrA family. As to quaternary structure, forms a heterotetramer with UvrB during the search for lesions.

Its subcellular location is the cytoplasm. Functionally, the UvrABC repair system catalyzes the recognition and processing of DNA lesions. UvrA is an ATPase and a DNA-binding protein. A damage recognition complex composed of 2 UvrA and 2 UvrB subunits scans DNA for abnormalities. When the presence of a lesion has been verified by UvrB, the UvrA molecules dissociate. The protein is UvrABC system protein A of Streptococcus pyogenes serotype M18 (strain MGAS8232).